A 477-amino-acid chain; its full sequence is Protein DETOXIFICATION 5 (477 aa).

12 helical membrane-spanning segments follow: residues 38 to 58 (AAPM…SVMV), 72 to 92 (LATA…VGAL), 113 to 133 (FSAI…WFYM), 146 to 166 (ISKV…AQAV), 187 to 207 (AITT…AFGL), 211 to 231 (GAAL…ALYV), 263 to 283 (AAMT…SGLL), 292 to 312 (VLSI…GIGA), 333 to 353 (AVFA…TLLF), 376 to 396 (LSSL…LDGV), 411 to 431 (VVAY…WGHM), and 436 to 456 (LWIG…IVTA).

Belongs to the multi antimicrobial extrusion (MATE) (TC 2.A.66.1) family.

It localises to the membrane. In Arabidopsis thaliana (Mouse-ear cress), this protein is Protein DETOXIFICATION 5.